The chain runs to 86 residues: Large ribosomal subunit protein bL27 (86 aa).

Gly residues predominate over residues 1–10 (MAQKKGGGST). Residues 1-21 (MAQKKGGGSTRNGRDSESKRL) are disordered.

Belongs to the bacterial ribosomal protein bL27 family.

In Ralstonia pickettii (strain 12J), this protein is Large ribosomal subunit protein bL27.